Here is a 568-residue protein sequence, read N- to C-terminus: Proline--tRNA ligase (568 aa).

Belongs to the class-II aminoacyl-tRNA synthetase family. ProS type 1 subfamily. In terms of assembly, homodimer.

The protein resides in the cytoplasm. The catalysed reaction is tRNA(Pro) + L-proline + ATP = L-prolyl-tRNA(Pro) + AMP + diphosphate. Catalyzes the attachment of proline to tRNA(Pro) in a two-step reaction: proline is first activated by ATP to form Pro-AMP and then transferred to the acceptor end of tRNA(Pro). As ProRS can inadvertently accommodate and process non-cognate amino acids such as alanine and cysteine, to avoid such errors it has two additional distinct editing activities against alanine. One activity is designated as 'pretransfer' editing and involves the tRNA(Pro)-independent hydrolysis of activated Ala-AMP. The other activity is designated 'posttransfer' editing and involves deacylation of mischarged Ala-tRNA(Pro). The misacylated Cys-tRNA(Pro) is not edited by ProRS. The protein is Proline--tRNA ligase of Nitrosomonas eutropha (strain DSM 101675 / C91 / Nm57).